The following is a 1578-amino-acid chain: Pentafunctional AROM polypeptide (1578 aa).

Positions 1–384 (MTGPTKISIL…YEPRASVVPN (384 aa)) are 3-dehydroquinate synthase. Residues 44 to 46 (DTN), 81 to 84 (EVSK), 114 to 116 (GGV), and Asp119 each bind NAD(+). Residue Arg130 participates in 7-phospho-2-dehydro-3-deoxy-D-arabino-heptonate binding. NAD(+) is bound at residue 139 to 140 (TT). 7-phospho-2-dehydro-3-deoxy-D-arabino-heptonate-binding residues include Asp146 and Lys152. An NAD(+)-binding site is contributed by Lys161. Asn162 contributes to the 7-phospho-2-dehydro-3-deoxy-D-arabino-heptonate binding site. NAD(+) is bound by residues 179–182 (FLET) and Asn190. Zn(2+) is bound at residue Glu194. Residues 194–197 (EVIK) and Lys250 contribute to the 7-phospho-2-dehydro-3-deoxy-D-arabino-heptonate site. The active-site Proton acceptor; for 3-dehydroquinate synthase activity is Glu260. 7-phospho-2-dehydro-3-deoxy-D-arabino-heptonate is bound by residues 264–268 (RNLLN) and His271. His271 contacts Zn(2+). His275 serves as the catalytic Proton acceptor; for 3-dehydroquinate synthase activity. The 7-phospho-2-dehydro-3-deoxy-D-arabino-heptonate site is built by His287 and Lys356. His287 lines the Zn(2+) pocket. Residues 397–842 (VYPGVSPASE…WDTLRQKFAV (446 aa)) are EPSP synthase. Cys824 serves as the catalytic For EPSP synthase activity. The shikimate kinase stretch occupies residues 864 to 1055 (SASVFIIGMR…KKKQHSFFVS (192 aa)). 871 to 878 (GMRGAGKT) lines the ATP pocket. Residues 1056–1276 (LTLPDVRGAD…AAPGQLSATD (221 aa)) are 3-dehydroquinase. His1179 (proton acceptor; for 3-dehydroquinate dehydratase activity) is an active-site residue. Catalysis depends on Lys1207, which acts as the Schiff-base intermediate with substrate; for 3-dehydroquinate dehydratase activity. A shikimate dehydrogenase region spans residues 1289–1578 (KKRFALFGSP…YERARAIVLG (290 aa)).

It in the N-terminal section; belongs to the sugar phosphate cyclases superfamily. Dehydroquinate synthase family. The protein in the 2nd section; belongs to the EPSP synthase family. This sequence in the 3rd section; belongs to the shikimate kinase family. In the 4th section; belongs to the type-I 3-dehydroquinase family. It in the C-terminal section; belongs to the shikimate dehydrogenase family. As to quaternary structure, homodimer. Zn(2+) is required as a cofactor.

It is found in the cytoplasm. It carries out the reaction 7-phospho-2-dehydro-3-deoxy-D-arabino-heptonate = 3-dehydroquinate + phosphate. The catalysed reaction is 3-dehydroquinate = 3-dehydroshikimate + H2O. It catalyses the reaction shikimate + NADP(+) = 3-dehydroshikimate + NADPH + H(+). The enzyme catalyses shikimate + ATP = 3-phosphoshikimate + ADP + H(+). It carries out the reaction 3-phosphoshikimate + phosphoenolpyruvate = 5-O-(1-carboxyvinyl)-3-phosphoshikimate + phosphate. It functions in the pathway metabolic intermediate biosynthesis; chorismate biosynthesis; chorismate from D-erythrose 4-phosphate and phosphoenolpyruvate: step 2/7. Its pathway is metabolic intermediate biosynthesis; chorismate biosynthesis; chorismate from D-erythrose 4-phosphate and phosphoenolpyruvate: step 3/7. It participates in metabolic intermediate biosynthesis; chorismate biosynthesis; chorismate from D-erythrose 4-phosphate and phosphoenolpyruvate: step 4/7. The protein operates within metabolic intermediate biosynthesis; chorismate biosynthesis; chorismate from D-erythrose 4-phosphate and phosphoenolpyruvate: step 5/7. It functions in the pathway metabolic intermediate biosynthesis; chorismate biosynthesis; chorismate from D-erythrose 4-phosphate and phosphoenolpyruvate: step 6/7. In terms of biological role, the AROM polypeptide catalyzes 5 consecutive enzymatic reactions in prechorismate polyaromatic amino acid biosynthesis. The polypeptide is Pentafunctional AROM polypeptide (Neosartorya fischeri (strain ATCC 1020 / DSM 3700 / CBS 544.65 / FGSC A1164 / JCM 1740 / NRRL 181 / WB 181) (Aspergillus fischerianus)).